A 384-amino-acid chain; its full sequence is Cytochrome b (384 aa).

Transmembrane regions (helical) follow at residues 32–52 (VGSLLGLCLVIQIASGIFLAM), 76–98 (WLIRYIHANGASFFFICMYLHIG), 113–133 (LWVIGVIIFVVTMATAFMGYC), and 179–199 (FFALHFLLPFILAALVCMHLM). Histidine 82 and histidine 96 together coordinate heme b. Heme b-binding residues include histidine 183 and histidine 197. Histidine 202 serves as a coordination point for a ubiquinone. The next 4 membrane-spanning stretches (helical) occupy residues 225–245 (FIFKDLVTVFVFLLVFSLFVF), 289–309 (LGGVIAMFGAILILLTLPYTD), 321–341 (LSKFMFFLFLFNFILLGNLGQ), and 348–368 (YIELGQYATAFYFAYYLLIVP).

It belongs to the cytochrome b family. Fungal cytochrome b-c1 complex contains 10 subunits; 3 respiratory subunits, 2 core proteins and 5 low-molecular weight proteins. Cytochrome b-c1 complex is a homodimer. Heme b is required as a cofactor.

The protein localises to the mitochondrion inner membrane. Functionally, component of the ubiquinol-cytochrome c reductase complex (complex III or cytochrome b-c1 complex) that is part of the mitochondrial respiratory chain. The b-c1 complex mediates electron transfer from ubiquinol to cytochrome c. Contributes to the generation of a proton gradient across the mitochondrial membrane that is then used for ATP synthesis. The polypeptide is Cytochrome b (COB) (Candida parapsilosis (Yeast)).